Here is a 793-residue protein sequence, read N- to C-terminus: Facilitated trehalose transporter Tret1 (793 aa).

The Cytoplasmic portion of the chain corresponds to 1–326; that stretch reads MNRKVGPVLE…LEVYRPTTNP (326 aa). Disordered stretches follow at residues 99-148 and 213-235; these read EKAK…EHKS and RHISFKFDKEPSPSSSDEDFEPS. Low complexity predominate over residues 104-113; that stretch reads KSSLKSSRVS. The span at 115–125 shows a compositional bias: acidic residues; that stretch reads DQEDDRFDEDE. Over residues 213-223 the composition is skewed to basic and acidic residues; it reads RHISFKFDKEP. The helical transmembrane segment at 327-347 threads the bilayer; that stretch reads IYIWTQVLAALSVSLGSMVVG. At 348–376 the chain is on the extracellular side; that stretch reads FSSAYTSPALVSMKDRNITSFEVTDQSGS. N364 carries N-linked (GlcNAc...) asparagine glycosylation. Residues 377 to 397 traverse the membrane as a helical segment; it reads WVGGIMPLAGLAGGILGGPMI. Topologically, residues 398-411 are cytoplasmic; the sequence is EYLGRKNTILATAT. The helical transmembrane segment at 412 to 432 threads the bilayer; the sequence is PFIISWLLIGCATHVAMVLVG. At 433–434 the chain is on the extracellular side; the sequence is RA. The helical transmembrane segment at 435 to 455 threads the bilayer; it reads LSGLCVGIASLSLPVYLGETV. Residues 456–460 lie on the Cytoplasmic side of the membrane; sequence QPEVR. The helical transmembrane segment at 461 to 481 threads the bilayer; the sequence is GTLGLLPTAFGNIGILLCFVA. Topologically, residues 482 to 488 are extracellular; the sequence is GKYLDWS. The chain crosses the membrane as a helical span at residues 489–509; the sequence is GLAFLGAALPIPFLLLMFLIP. Residues 510 to 572 lie on the Cytoplasmic side of the membrane; the sequence is ETPRWYVSRN…DLLNKANLKP (63 aa). A helical transmembrane segment spans residues 573 to 593; sequence LLISLGLMFFQQLSGINAVIF. The Extracellular segment spans residues 594–609; that stretch reads YTVQIFQSAGSTIDEK. A helical transmembrane segment spans residues 610–630; sequence LCTIIVGVVNFIATFIATVLI. The Cytoplasmic portion of the chain corresponds to 631–636; sequence DRLGRK. A helical transmembrane segment spans residues 637–657; sequence ILLYISDVAMIITLMTLGTFF. The Extracellular portion of the chain corresponds to 658–668; that stretch reads YMKNNGDDVSE. Residues 669–689 traverse the membrane as a helical segment; the sequence is IGWLPLAAFVVFVVGFSLGFG. Topologically, residues 690–703 are cytoplasmic; that stretch reads PIPWLMMGEILPGK. A helical membrane pass occupies residues 704-724; that stretch reads IRGSAASVATAFNWSCTFVVT. Residues 725–737 lie on the Extracellular side of the membrane; it reads KTFADITASIGNH. Residues 738-758 traverse the membrane as a helical segment; it reads GAFWMFGSICIVGLLFVIVYV. Residues 759–793 are Cytoplasmic-facing; sequence PETQGKSLEDIERKMMGRVRRMSSVANIKPLSFNM.

Belongs to the major facilitator superfamily. Sugar transporter (TC 2.A.1.1) family. Trehalose transporter subfamily.

The protein localises to the cell membrane. High-capacity facilitative transporter for trehalose. Does not transport maltose, sucrose or lactose. Mediates the bidirectional transfer of trehalose. Responsible for the transport of trehalose synthesized in the fat body and the incorporation of trehalose into other tissues that require a carbon source, thereby regulating trehalose levels in the hemolymph. This Anopheles gambiae (African malaria mosquito) protein is Facilitated trehalose transporter Tret1.